Reading from the N-terminus, the 644-residue chain is Methionine--tRNA ligase (644 aa).

The 'HIGH' region signature appears at 14 to 24; it reads YYPSAKLHIGN. Zn(2+)-binding residues include C129, C132, C146, and C149. A 'KMSKS' region motif is present at residues 299 to 303; sequence KMSKS. K302 is an ATP binding site. Residues 542–644 enclose the tRNA-binding domain; sequence DVDKLDLRVV…EDIPTGSIVR (103 aa).

This sequence belongs to the class-I aminoacyl-tRNA synthetase family. MetG type 2A subfamily. In terms of assembly, homodimer. The cofactor is Zn(2+).

The protein resides in the cytoplasm. It catalyses the reaction tRNA(Met) + L-methionine + ATP = L-methionyl-tRNA(Met) + AMP + diphosphate. In terms of biological role, is required not only for elongation of protein synthesis but also for the initiation of all mRNA translation through initiator tRNA(fMet) aminoacylation. The protein is Methionine--tRNA ligase (metG) of Clostridium acetobutylicum (strain ATCC 824 / DSM 792 / JCM 1419 / IAM 19013 / LMG 5710 / NBRC 13948 / NRRL B-527 / VKM B-1787 / 2291 / W).